The chain runs to 543 residues: Cytochrome P450 1B1 (543 aa).

Residue Cys-470 participates in heme binding.

Belongs to the cytochrome P450 family. Requires heme as cofactor. Constitutively expressed in retinal and kidney pericytes cells. Expressed in retinal endothelial cells (at protein level). Expressed in cardiac, pulmonary and aortic endothelial cells. Constitutively expressed in trabecular meshwork of the eye (at protein level).

Its subcellular location is the endoplasmic reticulum membrane. The protein resides in the microsome membrane. It localises to the mitochondrion. The catalysed reaction is an organic molecule + reduced [NADPH--hemoprotein reductase] + O2 = an alcohol + oxidized [NADPH--hemoprotein reductase] + H2O + H(+). It catalyses the reaction 17beta-estradiol + reduced [NADPH--hemoprotein reductase] + O2 = 2-hydroxy-17beta-estradiol + oxidized [NADPH--hemoprotein reductase] + H2O + H(+). The enzyme catalyses 17beta-estradiol + reduced [NADPH--hemoprotein reductase] + O2 = 4-hydroxy-17beta-estradiol + oxidized [NADPH--hemoprotein reductase] + H2O + H(+). It carries out the reaction estrone + reduced [NADPH--hemoprotein reductase] + O2 = 2-hydroxyestrone + oxidized [NADPH--hemoprotein reductase] + H2O + H(+). The catalysed reaction is estrone + reduced [NADPH--hemoprotein reductase] + O2 = 4-hydroxyestrone + oxidized [NADPH--hemoprotein reductase] + H2O + H(+). It catalyses the reaction testosterone + reduced [NADPH--hemoprotein reductase] + O2 = 6beta,17beta-dihydroxyandrost-4-en-3-one + oxidized [NADPH--hemoprotein reductase] + H2O + H(+). The enzyme catalyses progesterone + reduced [NADPH--hemoprotein reductase] + O2 = 6beta-hydroxyprogesterone + oxidized [NADPH--hemoprotein reductase] + H2O + H(+). It carries out the reaction progesterone + reduced [NADPH--hemoprotein reductase] + O2 = 16alpha-hydroxyprogesterone + oxidized [NADPH--hemoprotein reductase] + H2O + H(+). The catalysed reaction is all-trans-retinol + reduced [NADPH--hemoprotein reductase] + O2 = all-trans-retinal + oxidized [NADPH--hemoprotein reductase] + 2 H2O + H(+). It catalyses the reaction all-trans-retinal + reduced [NADPH--hemoprotein reductase] + O2 = all-trans-retinoate + oxidized [NADPH--hemoprotein reductase] + H2O + 2 H(+). The enzyme catalyses (5Z,8Z,11Z,14Z)-eicosatetraenoate + reduced [NADPH--hemoprotein reductase] + O2 = (8R,9S)-epoxy-(5Z,11Z,14Z)-eicosatrienoate + oxidized [NADPH--hemoprotein reductase] + H2O + H(+). It carries out the reaction (5Z,8Z,11Z,14Z)-eicosatetraenoate + reduced [NADPH--hemoprotein reductase] + O2 = (11R,12S)-epoxy-(5Z,8Z,14Z)-eicosatrienoate + oxidized [NADPH--hemoprotein reductase] + H2O + H(+). The catalysed reaction is (5Z,8Z,11Z,14Z)-eicosatetraenoate + reduced [NADPH--hemoprotein reductase] + O2 = (11S,12R)-epoxy-(5Z,8Z,14Z)-eicosatrienoate + oxidized [NADPH--hemoprotein reductase] + H2O + H(+). It catalyses the reaction (5Z,8Z,11Z,14Z)-eicosatetraenoate + reduced [NADPH--hemoprotein reductase] + O2 = (14R,15S)-epoxy-(5Z,8Z,11Z)-eicosatrienoate + oxidized [NADPH--hemoprotein reductase] + H2O + H(+). The enzyme catalyses (5S)-hydroperoxy-(6E,8Z,11Z,14Z)-eicosatetraenoate = 5-oxo-(6E,8Z,11Z,14Z)-eicosatetraenoate + H2O. It carries out the reaction (12S)-hydroperoxy-(5Z,8Z,10E,14Z)-eicosatetraenoate = 12-oxo-(5Z,8Z,10E,14Z)-eicosatetraenoate + H2O. The catalysed reaction is (13S)-hydroperoxy-(9Z,11E)-octadecadienoate = 13-oxo-(9Z,11E)-octadecadienoate + H2O. It catalyses the reaction (15S)-hydroperoxy-(5Z,8Z,11Z,13E)-eicosatetraenoate = 15-oxo-(5Z,8Z,11Z,13E)-eicosatetraenoate + H2O. The protein operates within steroid hormone biosynthesis. It functions in the pathway cofactor metabolism; retinol metabolism. Its pathway is lipid metabolism; arachidonate metabolism. Its activity is regulated as follows. Enzyme activity is increased by cytochrome b5. Enzyme activity is increased by liposomes containing anionic phospholipids, phosphatidic acid and cardiolipin. Inhibited by naringenin with an IC(50) of 5 uM. In terms of biological role, a cytochrome P450 monooxygenase involved in the metabolism of various endogenous substrates, including fatty acids, steroid hormones and vitamins. Mechanistically, uses molecular oxygen inserting one oxygen atom into a substrate, and reducing the second into a water molecule, with two electrons provided by NADPH via cytochrome P450 reductase (NADPH--hemoprotein reductase). Exhibits catalytic activity for the formation of hydroxyestrogens from 17beta-estradiol (E2), namely 2- and 4-hydroxy E2. Metabolizes testosterone and progesterone to B or D ring hydroxylated metabolites. May act as a major enzyme for all-trans retinoic acid biosynthesis in extrahepatic tissues. Catalyzes two successive oxidative transformation of all-trans retinol to all-trans retinal and then to the active form all-trans retinoic acid. Catalyzes the epoxidation of double bonds of certain PUFA. Converts arachidonic acid toward epoxyeicosatrienoic acid (EpETrE) regioisomers, 8,9-, 11,12-, and 14,15- EpETrE, that function as lipid mediators in the vascular system. Additionally, displays dehydratase activity toward oxygenated eicosanoids hydroperoxyeicosatetraenoates (HpETEs). This activity is independent of cytochrome P450 reductase, NADPH, and O2. Also involved in the oxidative metabolism of xenobiotics, particularly converting polycyclic aromatic hydrocarbons and heterocyclic aryl amines procarcinogens to DNA-damaging products. Plays an important role in retinal vascular development. Under ambient/hyperoxic O2 conditions, promotes angiogenesis and capillary morphogenesis of retinal endothelial cells and pericytes, likely by metabolizing the oxygenated products symptomatic of oxidative stress. Also, contributes to oxidative homeostasis and ultrastructural organization and function of trabecular meshwork tissue through modulation of POSTN expression. The sequence is that of Cytochrome P450 1B1 from Mus musculus (Mouse).